We begin with the raw amino-acid sequence, 970 residues long: Sodium/calcium exchanger 1 (970 aa).

An N-terminal signal peptide occupies residues 1 to 32 (MLQFSLSPTLSMGFHVIAMVALLFSHVDHISA). Residues 33–71 (ETEMEGEGNETGECTGSYYCKKGVILPIWEPQDPSFGDK) are Extracellular-facing. N-linked (GlcNAc...) asparagine glycosylation is present at asparagine 41. The helical transmembrane segment at 72 to 92 (IARATVYFVAMVYMFLGVSII) threads the bilayer. Over 93–133 (ADRFMSSIEVITSQEKEITIKKPNGETTKTTVRIWNETVSN) the chain is Cytoplasmic. The helical transmembrane segment at 134 to 154 (LTLMALGSSAPEILLSVIEVC) threads the bilayer. The Alpha-1 repeat unit spans residues 138-178 (ALGSSAPEILLSVIEVCGHNFTAGDLGPSTIVGSAAFNMFI). At 155–167 (GHNFTAGDLGPST) the chain is on the extracellular side. N-linked (GlcNAc...) asparagine glycosylation is present at asparagine 157. A helical membrane pass occupies residues 168–188 (IVGSAAFNMFIIIALCVYVVP). Over 189–201 (DGETRKIKHLRVF) the chain is Cytoplasmic. Residues 202-222 (FVTAAWSIFAYTWLYIILSVS) traverse the membrane as a helical segment. The Extracellular portion of the chain corresponds to 223 to 228 (SPGVVE). The chain crosses the membrane as a helical span at residues 229-249 (VWEGLLTFFFFPICVVFAWVA). Residues 250 to 797 (DRRLLFYKYV…FVPPTEYWNG (548 aa)) lie on the Cytoplasmic side of the membrane. The tract at residues 251 to 270 (RRLLFYKYVYKRYRAGKQRG) is putative calmodulin-binding region. Serine 282 and serine 389 each carry phosphoserine. Calx-beta domains follow at residues 393–493 (VNTE…VHLS) and 524–624 (ATVT…LEIG). Residues glutamate 417, aspartate 453, aspartate 478, aspartate 479, isoleucine 481, glutamate 483, glutamate 486, aspartate 530, aspartate 531, aspartate 532, glutamate 548, aspartate 584, aspartate 610, glutamate 611, glutamate 612, and glutamate 715 each coordinate Ca(2+). Residues 798–818 (WACFIVSILMIGLLTAFIGDL) form a helical membrane-spanning segment. Residues 819 to 821 (ASH) are Extracellular-facing. The helical transmembrane segment at 822-842 (FACTIALKDSVTAVVFVALGT) threads the bilayer. An Alpha-2 repeat occupies 839–875 (ALGTSVPDTFASKVAATQDQYADASIGNVTGSNAVNV). At 843 to 871 (SVPDTFASKVAATQDQYADASIGNVTGSN) the chain is on the cytoplasmic side. The helical transmembrane segment at 872-892 (AVNVFLGIGVAWSIAAIYHAA) threads the bilayer. Residues 893 to 903 (NGEQFKVSPGT) lie on the Extracellular side of the membrane. Residues 904–924 (LAFSVTLFTIFAFINVGVLLY) traverse the membrane as a helical segment. At 925–941 (RRRPEIGGELGGPRTAK) the chain is on the cytoplasmic side. The chain crosses the membrane as a helical span at residues 942-962 (LLTSCLFVLLWLLYIFFSSLE). Topologically, residues 963–970 (AYCHIKGF) are extracellular.

It belongs to the Ca(2+):cation antiporter (CaCA) (TC 2.A.19) family. SLC8 subfamily.

The protein resides in the cell membrane. It catalyses the reaction Ca(2+)(in) + 3 Na(+)(out) = Ca(2+)(out) + 3 Na(+)(in). Its activity is regulated as follows. Activated by micromolar levels of Ca(2+). Mediates the exchange of one Ca(2+) ion against three to four Na(+) ions across the cell membrane, and thereby contributes to the regulation of cytoplasmic Ca(2+) levels and Ca(2+)-dependent cellular processes. Contributes to Ca(2+) transport during excitation-contraction coupling in muscle. In a first phase, voltage-gated channels mediate the rapid increase of cytoplasmic Ca(2+) levels due to release of Ca(2+) stores from the endoplasmic reticulum. SLC8A1 mediates the export of Ca(2+) from the cell during the next phase, so that cytoplasmic Ca(2+) levels rapidly return to baseline. Required for normal embryonic heart development and the onset of heart contractions. In Bos taurus (Bovine), this protein is Sodium/calcium exchanger 1 (SLC8A1).